A 221-amino-acid polypeptide reads, in one-letter code: MAGFLSVVRRVYLTLYNWIVFAGWAQVLYLAITTLKETGYENVYDAIEKPLQLAQTAAVLEILHGLVGLVRSPVSATLPQIGSRLFLTWGILYSFPEVRSHFLVTSLVISWSITEIIRYSFFGFKEALGFAPSWHLWLRYSSFLLLYPTGITSEVGLIYLALPHIKTSEMYSVRMPNILNFSFDFFYATILVLAIYVPGSPHMYRYMLGQRKRALSKSKRE.

Over 1-11 (MAGFLSVVRRV) the chain is Cytoplasmic. The helical transmembrane segment at 12–32 (YLTLYNWIVFAGWAQVLYLAI) threads the bilayer. At 33–51 (TTLKETGYENVYDAIEKPL) the chain is on the lumenal side. The helical transmembrane segment at 52-70 (QLAQTAAVLEILHGLVGLV) threads the bilayer. The Cytoplasmic segment spans residues 71-76 (RSPVSA). Residues 77-95 (TLPQIGSRLFLTWGILYSF) form a helical membrane-spanning segment. Topologically, residues 96–100 (PEVRS) are lumenal. A helical transmembrane segment spans residues 101-122 (HFLVTSLVISWSITEIIRYSFF). At 123-142 (GFKEALGFAPSWHLWLRYSS) the chain is on the cytoplasmic side. The chain crosses the membrane as a helical span at residues 143-165 (FLLLYPTGITSEVGLIYLALPHI). Active-site residues include tyrosine 147 and glutamate 154. At 166-184 (KTSEMYSVRMPNILNFSFD) the chain is on the lumenal side. A helical transmembrane segment spans residues 185–204 (FFYATILVLAIYVPGSPHMY). Topologically, residues 205–221 (RYMLGQRKRALSKSKRE) are cytoplasmic.

Belongs to the very long-chain fatty acids dehydratase HACD family. In terms of assembly, interacts with CDKA-1; but only with the 'Tyr-15' phosphorylated protein. Interacts with PAS1. Part of the fatty acid elongase complex which contains a beta-ketoacyl-CoA synthase (KCS), a beta-ketoacyl-CoA reductase (KCR), a beta-hydroxyacyl-CoA dehydratase (HCD) and an enoyl-CoA reductase (ECR). High expression in young seedlings, roots, root tips, flowers and young siliques. Lower levels in leaves and stems.

It localises to the endoplasmic reticulum membrane. Its subcellular location is the cytoplasm. The protein resides in the nucleus. It carries out the reaction a very-long-chain (3R)-3-hydroxyacyl-CoA = a very-long-chain (2E)-enoyl-CoA + H2O. It participates in lipid metabolism; fatty acid biosynthesis. Functionally, catalyzes the third of the four reactions of the long-chain fatty acids elongation cycle. This endoplasmic reticulum-bound enzymatic process, allows the addition of two carbons to the chain of long- and very long-chain fatty acids/VLCFAs per cycle. This enzyme catalyzes the dehydration of the 3-hydroxyacyl-CoA intermediate into trans-2,3-enoyl-CoA, within each cycle of fatty acid elongation. Thereby, it participates in the production of VLCFAs of different chain lengths that are involved in multiple biological processes as precursors of membrane lipids and lipid mediators. May be an anti-phosphatase that prevents CDKA-1 dephosphorylation and activation. Involved in the hormonal control of cell division and differentiation. Required for proliferation control of meristematic and non-meristematic cells. Negative regulator of the cell cycle. This chain is Very-long-chain (3R)-3-hydroxyacyl-CoA dehydratase PASTICCINO 2 (PAS2), found in Arabidopsis thaliana (Mouse-ear cress).